Consider the following 284-residue polypeptide: uncharacterized protein (284 aa).

A helical transmembrane segment spans residues 12–32 (ILFILFVVAFCVYLVPRVAIN).

It belongs to the serine esterase family.

The protein resides in the membrane. This is an uncharacterized protein from Escherichia coli O157:H7.